We begin with the raw amino-acid sequence, 234 residues long: Nitroreductase NfnB (234 aa).

Position 25–29 (25–29 (RRAVR)) interacts with FMN. The NADP(+) site is built by serine 55, arginine 105, tyrosine 113, and isoleucine 118. Residues tyrosine 137, 181-182 (AL), and arginine 223 contribute to the FMN site.

Belongs to the nitroreductase family. As to quaternary structure, homodimer. FMN serves as cofactor.

In terms of biological role, confers resistance to antitubercular drugs benzothiazinone (BTZ) and dinitrobenzamide (DNB). Inactivates BTZ and DNB by reducing an essential nitro group of these compounds to amino group or to hydroxyl amine, respectively, using NADH or NADPH as source of reducing equivalents; two electrons are transferred. Able to reduce the nitro group of bicyclic nitroimidazole PA-824, but not of quinone menadione, nitrofurazone, methyl-4-nitrobenzoate, 4-nitrobenzene methyl sulfonate or 4-nitroacetophenone. The sequence is that of Nitroreductase NfnB from Mycolicibacterium smegmatis (strain ATCC 700084 / mc(2)155) (Mycobacterium smegmatis).